A 179-amino-acid chain; its full sequence is Apolipophorin-3b (179 aa).

Residues 1-16 (MNTLLAVLMLAVAAQA) form the signal peptide. 12 repeats span residues 30–40 (VQQLNHTIVNA), 41–52 (AHELHETLGLPT), 53–60 (PDEALNLL), 61–78 (TEQANAFKTKIAEVTTSL), 79–89 (KQEAEKHQGSV), 90–99 (AEQLNRFARN), 100–113 (LNNSIHDAATSAQP), 114–127 (ADQLNSLQSALTNV), 128–140 (GHQWQTSQPRPSV), 141–151 (AQEAWAPVQSA), 152–165 (LQEAAEKTKEAAAN), and 166–179 (LQNSIQSAVQKPAN). Asn-34 carries N-linked (GlcNAc...) asparagine glycosylation. N-linked (GlcNAc...) asparagine glycosylation is present at Asn-101. The disordered stretch occupies residues 152 to 179 (LQEAAEKTKEAAANLQNSIQSAVQKPAN). Positions 165 to 179 (NLQNSIQSAVQKPAN) are enriched in polar residues.

Belongs to the insect apolipophorin-3 family. In terms of assembly, equilibrium between a soluble monomer and a bound lipoprotein form. Apolipophorin-3 associates with lipophorin during lipid loading until each particle contains 14 molecules of apolipophorin-3 in L.migratoria (5 molecules of apolipophorin-3a and 9 of apolipophorin-3b). In terms of tissue distribution, hemolymph.

It localises to the secreted. Functionally, assists in the loading of diacylglycerol, generated from triacylglycerol stores in the fat body through the action of adipokinetic hormone, into lipophorin, the hemolymph lipoprotein. It increases the lipid carrying capacity of lipophorin by covering the expanding hydrophobic surface resulting from diacylglycerol uptake. It thus plays a critical role in the transport of lipids during flight in several species of insects. This chain is Apolipophorin-3b, found in Locusta migratoria (Migratory locust).